We begin with the raw amino-acid sequence, 213 residues long: Large ribosomal subunit protein uL18c (213 aa).

It belongs to the universal ribosomal protein uL18 family.

The protein localises to the plastid. The protein resides in the apicoplast. This chain is Large ribosomal subunit protein uL18c (RPL18), found in Plasmodium falciparum (isolate 3D7).